The following is a 464-amino-acid chain: Zinc transporter 6 (464 aa).

The Cytoplasmic portion of the chain corresponds to 1-33; that stretch reads MGTIYLFRKTQRSLLGKLTQEFRLVTADRRSWK. The chain crosses the membrane as a helical span at residues 34 to 54; the sequence is ILLFGAINVVCTGFLLTWCSS. At 55 to 64 the chain is on the extracellular side; it reads TNSMALTAYT. A helical membrane pass occupies residues 65-85; it reads YLTIFDLFSLITCLISYWVMM. The Cytoplasmic segment spans residues 86–98; that stretch reads KKPSPTYSFGFER. A helical transmembrane segment spans residues 99 to 119; the sequence is FEVLSVFASTVLAQLGALFIL. Topologically, residues 120 to 134 are extracellular; it reads KESAERFVEQPEIHT. A helical membrane pass occupies residues 135–155; that stretch reads GRLLVGTFVALCFNLFSMLSI. Residues 156 to 200 are Cytoplasmic-facing; sequence RNKPFAYVSEAASTSWLQEHVADLSRSLCGIIPGLSSIFLPRMNP. The helical transmembrane segment at 201-221 threads the bilayer; sequence FVLIDIAGALALCITYMLIEI. Over 222 to 228 the chain is Extracellular; it reads NNYFAVD. The chain crosses the membrane as a helical span at residues 229–249; sequence TASAIAIAVMTFGTMYPMSVY. At 250-464 the chain is on the cytoplasmic side; it reads SGKVLLQTTP…TPGQFTQFKQ (215 aa).

The protein belongs to the cation diffusion facilitator (CDF) transporter (TC 2.A.4) family. SLC30A subfamily. Heterodimer with SLC30A5; form a functional zinc ion transmembrane transporter.

The protein resides in the golgi apparatus. Its subcellular location is the trans-Golgi network membrane. Its function is as follows. Has probably no intrinsic transporter activity but together with SLC30A5 forms a functional zinc ion:proton antiporter heterodimer, mediating zinc entry into the lumen of organelles along the secretory pathway. As part of that zinc ion:proton antiporter, contributes to zinc ion homeostasis within the early secretory pathway and regulates the activation and folding of enzymes like alkaline phosphatases and enzymes involved in phosphatidylinositol glycan anchor biosynthesis. In Xenopus tropicalis (Western clawed frog), this protein is Zinc transporter 6 (slc30a6).